A 105-amino-acid polypeptide reads, in one-letter code: Large ribosomal subunit protein uL24 (105 aa).

This sequence belongs to the universal ribosomal protein uL24 family. As to quaternary structure, part of the 50S ribosomal subunit.

Its function is as follows. One of two assembly initiator proteins, it binds directly to the 5'-end of the 23S rRNA, where it nucleates assembly of the 50S subunit. In terms of biological role, one of the proteins that surrounds the polypeptide exit tunnel on the outside of the subunit. This chain is Large ribosomal subunit protein uL24, found in Marinomonas sp. (strain MWYL1).